The primary structure comprises 429 residues: Ribosomal RNA small subunit methyltransferase B (429 aa).

S-adenosyl-L-methionine contacts are provided by residues 254 to 260 (CAAPGGK), Asp-277, Asp-303, and Asp-322. Residue Cys-375 is the Nucleophile of the active site.

Belongs to the class I-like SAM-binding methyltransferase superfamily. RsmB/NOP family.

It localises to the cytoplasm. It carries out the reaction cytidine(967) in 16S rRNA + S-adenosyl-L-methionine = 5-methylcytidine(967) in 16S rRNA + S-adenosyl-L-homocysteine + H(+). Its function is as follows. Specifically methylates the cytosine at position 967 (m5C967) of 16S rRNA. In Photorhabdus laumondii subsp. laumondii (strain DSM 15139 / CIP 105565 / TT01) (Photorhabdus luminescens subsp. laumondii), this protein is Ribosomal RNA small subunit methyltransferase B.